The primary structure comprises 106 residues: Phosphoribosyl-ATP pyrophosphatase (106 aa).

It belongs to the PRA-PH family.

The protein localises to the cytoplasm. It carries out the reaction 1-(5-phospho-beta-D-ribosyl)-ATP + H2O = 1-(5-phospho-beta-D-ribosyl)-5'-AMP + diphosphate + H(+). The protein operates within amino-acid biosynthesis; L-histidine biosynthesis; L-histidine from 5-phospho-alpha-D-ribose 1-diphosphate: step 2/9. The protein is Phosphoribosyl-ATP pyrophosphatase of Lactiplantibacillus plantarum (strain ATCC BAA-793 / NCIMB 8826 / WCFS1) (Lactobacillus plantarum).